We begin with the raw amino-acid sequence, 283 residues long: 4-diphosphocytidyl-2-C-methyl-D-erythritol kinase (283 aa).

Lys11 is a catalytic residue. Pro94–Ala104 contacts ATP. Residue Asp136 is part of the active site.

It belongs to the GHMP kinase family. IspE subfamily.

The catalysed reaction is 4-CDP-2-C-methyl-D-erythritol + ATP = 4-CDP-2-C-methyl-D-erythritol 2-phosphate + ADP + H(+). The protein operates within isoprenoid biosynthesis; isopentenyl diphosphate biosynthesis via DXP pathway; isopentenyl diphosphate from 1-deoxy-D-xylulose 5-phosphate: step 3/6. Functionally, catalyzes the phosphorylation of the position 2 hydroxy group of 4-diphosphocytidyl-2C-methyl-D-erythritol. The protein is 4-diphosphocytidyl-2-C-methyl-D-erythritol kinase of Acetivibrio thermocellus (strain ATCC 27405 / DSM 1237 / JCM 9322 / NBRC 103400 / NCIMB 10682 / NRRL B-4536 / VPI 7372) (Clostridium thermocellum).